The chain runs to 115 residues: Phosphoribosyl-AMP cyclohydrolase (115 aa).

A Mg(2+)-binding site is contributed by D80. Residue C81 coordinates Zn(2+). Residues D82 and D84 each coordinate Mg(2+). Residues C97 and C104 each contribute to the Zn(2+) site.

This sequence belongs to the PRA-CH family. As to quaternary structure, homodimer. It depends on Mg(2+) as a cofactor. Zn(2+) serves as cofactor.

Its subcellular location is the cytoplasm. The catalysed reaction is 1-(5-phospho-beta-D-ribosyl)-5'-AMP + H2O = 1-(5-phospho-beta-D-ribosyl)-5-[(5-phospho-beta-D-ribosylamino)methylideneamino]imidazole-4-carboxamide. The protein operates within amino-acid biosynthesis; L-histidine biosynthesis; L-histidine from 5-phospho-alpha-D-ribose 1-diphosphate: step 3/9. Functionally, catalyzes the hydrolysis of the adenine ring of phosphoribosyl-AMP. This Rhodococcus erythropolis (strain PR4 / NBRC 100887) protein is Phosphoribosyl-AMP cyclohydrolase.